A 313-amino-acid chain; its full sequence is Elongation factor Ts (313 aa).

Positions 82–85 (TDFV) are involved in Mg(2+) ion dislocation from EF-Tu.

It belongs to the EF-Ts family.

It localises to the cytoplasm. Associates with the EF-Tu.GDP complex and induces the exchange of GDP to GTP. It remains bound to the aminoacyl-tRNA.EF-Tu.GTP complex up to the GTP hydrolysis stage on the ribosome. The chain is Elongation factor Ts from Nostoc sp. (strain PCC 7120 / SAG 25.82 / UTEX 2576).